We begin with the raw amino-acid sequence, 427 residues long: Glutamate-1-semialdehyde 2,1-aminomutase (427 aa).

Lys267 is modified (N6-(pyridoxal phosphate)lysine).

Belongs to the class-III pyridoxal-phosphate-dependent aminotransferase family. HemL subfamily. As to quaternary structure, homodimer. It depends on pyridoxal 5'-phosphate as a cofactor.

It is found in the cytoplasm. The catalysed reaction is (S)-4-amino-5-oxopentanoate = 5-aminolevulinate. The protein operates within porphyrin-containing compound metabolism; protoporphyrin-IX biosynthesis; 5-aminolevulinate from L-glutamyl-tRNA(Glu): step 2/2. The polypeptide is Glutamate-1-semialdehyde 2,1-aminomutase (Geotalea daltonii (strain DSM 22248 / JCM 15807 / FRC-32) (Geobacter daltonii)).